Here is a 584-residue protein sequence, read N- to C-terminus: uncharacterized protein (584 aa).

Disordered regions lie at residues 123 to 156 (LSCSSSSPSSSSSSSSSSPRLISTPPIISTPSSP), 209 to 264 (KIVT…INGG), and 355 to 479 (STQL…ITPT). Low complexity-rich tracts occupy residues 237–260 (SLSFKSPCSSPSSSSSSTTTPKSS) and 366–376 (SISAATTTTIT). Composition is skewed to polar residues over residues 377–388 (PHNNNSTMTTKT) and 395–419 (DTSNLSTPKSTSSTINKAFTTSTTP). A compositionally biased stretch (low complexity) spans 425-479 (MSMTPLSSSSSSSTTPSKFINPLPSSSSKTTTTITNSKRLSTLSKPSPITPITPT).

This is an uncharacterized protein from Dictyostelium discoideum (Social amoeba).